A 310-amino-acid polypeptide reads, in one-letter code: Aspartate carbamoyltransferase catalytic subunit (310 aa).

The carbamoyl phosphate site is built by R58 and T59. Residue K86 participates in L-aspartate binding. Residues R108, H136, and Q139 each contribute to the carbamoyl phosphate site. L-aspartate-binding residues include R169 and R224. Positions 265 and 266 each coordinate carbamoyl phosphate.

The protein belongs to the aspartate/ornithine carbamoyltransferase superfamily. ATCase family. As to quaternary structure, heterododecamer (2C3:3R2) of six catalytic PyrB chains organized as two trimers (C3), and six regulatory PyrI chains organized as three dimers (R2).

The enzyme catalyses carbamoyl phosphate + L-aspartate = N-carbamoyl-L-aspartate + phosphate + H(+). It participates in pyrimidine metabolism; UMP biosynthesis via de novo pathway; (S)-dihydroorotate from bicarbonate: step 2/3. Catalyzes the condensation of carbamoyl phosphate and aspartate to form carbamoyl aspartate and inorganic phosphate, the committed step in the de novo pyrimidine nucleotide biosynthesis pathway. The sequence is that of Aspartate carbamoyltransferase catalytic subunit from Trichlorobacter lovleyi (strain ATCC BAA-1151 / DSM 17278 / SZ) (Geobacter lovleyi).